The sequence spans 210 residues: Small ribosomal subunit protein uS4 (210 aa).

One can recognise an S4 RNA-binding domain in the interval 100–160 (GRLDNVVYRM…EKSKNQLRVK (61 aa)).

It belongs to the universal ribosomal protein uS4 family. Part of the 30S ribosomal subunit. Contacts protein S5. The interaction surface between S4 and S5 is involved in control of translational fidelity.

Its function is as follows. One of the primary rRNA binding proteins, it binds directly to 16S rRNA where it nucleates assembly of the body of the 30S subunit. Functionally, with S5 and S12 plays an important role in translational accuracy. In Alcanivorax borkumensis (strain ATCC 700651 / DSM 11573 / NCIMB 13689 / SK2), this protein is Small ribosomal subunit protein uS4.